The sequence spans 585 residues: FAD-linked oxidoreductase apf9 (585 aa).

Positions 1–19 (MKPHTVSLVLSNLASLAAA) are cleaved as a signal peptide. Asn-40, Asn-92, and Asn-117 each carry an N-linked (GlcNAc...) asparagine glycan. The region spanning 108 to 294 (IGNSPVYVVN…TEITVKTYPT (187 aa)) is the FAD-binding PCMH-type domain. Residue His-145 is modified to Pros-8alpha-FAD histidine. Asn-352, Asn-412, and Asn-495 each carry an N-linked (GlcNAc...) asparagine glycan.

Belongs to the oxygen-dependent FAD-linked oxidoreductase family. FAD serves as cofactor.

It functions in the pathway secondary metabolite biosynthesis. Its function is as follows. FAD-linked oxidoreductase; part of the gene cluster that mediates the biosynthesis of the cyclic tetrapeptide apicidin F (APF). The non-ribosomal peptide synthetase apf1 incorporates four different amino acids to produce apicidin F: L-phenylalanine, D-pipecolic acid (D-pip), N-methoxy-L-tryptophan and L-2-aminooctanedioic acid. L-Phenylalanine is the only proteinogenic amino acid directly used by apf1. The 3 other apf1 substrates are non-proteinogenic and have to be modified by other enzymes of the cluster. Lysine is converted to delta-1-pyrroline-5-carboxylate (P5C) which is reduced to L-pipecolic acid (L-pip) by apf3. L-pip is epimerized to D-pip, probably by apf1 activity, prior to incorporation. L-Tryptophan is N-oxidyzed by one of the cytochrome P450 monooxygenases (apf7 or apf8), and further methylated at the hydroxy group by the O-methyltransferase apf6 to yield N-methoxy-L-tryptophan. The synthesis of the fourth apf1 substrate is more complex. The fatty acid synthase apf5 is involved in the synthesis of the octanoic acid backbone of L-2-aminooctanedioic acid by fixing one acetyl-CoA unit and three malonyl-CoA units. Then one of the cytochrome P450 monooxygenases (apf7 or apf8) may oxidize this backbone to 2-oxooctanoic acid. The aminotransferase apf4 is predicted to catalyze the exchange of the keto group with an amino group. The next step would be the oxidation of 2-aminooctanoic acid by one of the cytochrome P450 monooxygenases (apf7 or apf8). The last step is the oxidation of 2-amino-8-hydroxyoctanoic acid to 2-aminooctanedioic acid is catalyzed by the FAD-dependent monooxygenase apf9. The chain is FAD-linked oxidoreductase apf9 from Gibberella fujikuroi (strain CBS 195.34 / IMI 58289 / NRRL A-6831) (Bakanae and foot rot disease fungus).